The sequence spans 348 residues: Glycerol-1-phosphate dehydrogenase [NAD(P)+] (348 aa).

Residues 94-98 (GKVID) and T116 each bind NAD(+). Residue D121 coordinates substrate. NAD(+) is bound at residue S125. A substrate-binding site is contributed by D168. D168 and H248 together coordinate Zn(2+). Position 252 (H252) interacts with substrate. H264 contributes to the Zn(2+) binding site.

Belongs to the glycerol-1-phosphate dehydrogenase family. As to quaternary structure, homooctamer. Requires Zn(2+) as cofactor.

It is found in the cytoplasm. It carries out the reaction sn-glycerol 1-phosphate + NAD(+) = dihydroxyacetone phosphate + NADH + H(+). The enzyme catalyses sn-glycerol 1-phosphate + NADP(+) = dihydroxyacetone phosphate + NADPH + H(+). It functions in the pathway membrane lipid metabolism; glycerophospholipid metabolism. In terms of biological role, catalyzes the NAD(P)H-dependent reduction of dihydroxyacetonephosphate (DHAP or glycerone phosphate) to glycerol 1-phosphate (G1P). The G1P thus generated is used as the glycerophosphate backbone of phospholipids in the cellular membranes of Archaea. The protein is Glycerol-1-phosphate dehydrogenase [NAD(P)+] of Methanosphaera stadtmanae (strain ATCC 43021 / DSM 3091 / JCM 11832 / MCB-3).